The sequence spans 149 residues: L-alanine exporter AlaE (149 aa).

The next 4 membrane-spanning stretches (helical) occupy residues 16–36 (FAMV…LSGM), 46–66 (LVAI…RDLI), 83–105 (ADVL…TVGA), and 115–135 (SSNI…LDYC).

The protein belongs to the AlaE exporter family.

Its subcellular location is the cell inner membrane. Its function is as follows. Exports L-alanine. The sequence is that of L-alanine exporter AlaE from Salmonella typhimurium (strain LT2 / SGSC1412 / ATCC 700720).